A 277-amino-acid polypeptide reads, in one-letter code: Carbonyl reductase [NADPH] 3 (277 aa).

Ser-2 is subject to N-acetylserine. NADP(+) is bound by residues 10–34 (VTGA…GDVV), 38–42 (RDEAR), 63–64 (DI), and Asn-90. Ser-30 carries the post-translational modification Phosphoserine. Residue Ser-140 participates in substrate binding. Tyr-194 serves as the catalytic Proton acceptor. 194 to 198 (YGVSK) serves as a coordination point for NADP(+).

Belongs to the short-chain dehydrogenases/reductases (SDR) family.

It localises to the cytoplasm. The catalysed reaction is a secondary alcohol + NADP(+) = a ketone + NADPH + H(+). It catalyses the reaction a quinone + NADPH + H(+) = a quinol + NADP(+). Catalyzes the NADPH-dependent reduction of carbonyl compounds to their corresponding alcohols. Has low NADPH-dependent oxidoreductase activity. Acts on several orthoquinones, as well as on non-quinone compounds, such as isatin or on the anticancer drug oracin. Best substrates for CBR3 is 1,2- naphthoquinone, hence could play a role in protection against cytotoxicity of exogenous quinones. Exerts activity toward ortho-quinones but not paraquinones. No endogenous substrate for CBR3 except isatin has been identified. The chain is Carbonyl reductase [NADPH] 3 (Cbr3) from Mus musculus (Mouse).